A 468-amino-acid chain; its full sequence is 6-phosphogluconate dehydrogenase, decarboxylating (468 aa).

NADP(+) contacts are provided by residues 10-15, 33-35, 74-76, and Asn102; these read GMAVMG, NRT, and VQS. Substrate-binding positions include Asn102 and 128-130; that span reads SGG. Catalysis depends on Lys182, which acts as the Proton acceptor. Residue 185 to 186 coordinates substrate; the sequence is HN. The active-site Proton donor is the Glu189. 5 residues coordinate substrate: Tyr190, Lys259, Arg286, Arg445, and His451.

This sequence belongs to the 6-phosphogluconate dehydrogenase family. In terms of assembly, homodimer.

The enzyme catalyses 6-phospho-D-gluconate + NADP(+) = D-ribulose 5-phosphate + CO2 + NADPH. It functions in the pathway carbohydrate degradation; pentose phosphate pathway; D-ribulose 5-phosphate from D-glucose 6-phosphate (oxidative stage): step 3/3. Its function is as follows. Catalyzes the oxidative decarboxylation of 6-phosphogluconate to ribulose 5-phosphate and CO(2), with concomitant reduction of NADP to NADPH. The chain is 6-phosphogluconate dehydrogenase, decarboxylating (gnd) from Buchnera aphidicola subsp. Acyrthosiphon pisum (strain APS) (Acyrthosiphon pisum symbiotic bacterium).